Consider the following 803-residue polypeptide: Bromodomain-containing protein 2 (803 aa).

Met-1 is modified (N-acetylmethionine). Thr-6 carries the post-translational modification Phosphothreonine. Position 37 is a phosphoserine (Ser-37). The tract at residues 53-73 is disordered; the sequence is ALQLTPANPPPPEVSNPKKPG. One can recognise a Bromo 1 domain in the interval 74 to 180; it reads RVTNQLQYLH…KIFLQKVASM (107 aa). A protein is bound by residues Asp-112, Tyr-155, Asn-156, Lys-157, Asp-160, and Asp-161. Disordered stretches follow at residues 268-348, 456-652, and 739-803; these read PPAQ…KLSE, EPLE…KRQL, and EKRL…SDSG. Low complexity predominate over residues 285 to 298; the sequence is TTTPTPTAILAPGS. Phosphoserine is present on residues Ser-298 and Ser-301. Positions 316-332 are enriched in basic and acidic residues; that stretch reads VRRESGRPIKPPRKDLP. Positions 344–453 constitute a Bromo 2 domain; sequence GKLSEQLKHC…DVFEFRYAKM (110 aa). A compositionally biased stretch (acidic residues) spans 481–515; it reads SSEESSSESSSEEEEEEDEDEEEEEEESESSDSEE. The segment covering 545-567 has biased composition (basic residues); that stretch reads KPKRKREKKEKKKKRKAEKHRGR. A Nuclear localization signal motif is present at residues 556-560; the sequence is KKKRK. The segment covering 623–632 has biased composition (low complexity); that stretch reads KTAPPALPAG. The NET domain occupies 634 to 716; that stretch reads DSEEEEESRP…SCLRKKPRKP (83 aa). Ser-635 bears the Phosphoserine mark. The segment covering 641 to 652 has biased composition (basic and acidic residues); it reads SRPMSYDEKRQL. A compositionally biased stretch (low complexity) spans 777–797; that stretch reads SASSSSSDSSSSSSSSSSSDT.

The protein belongs to the BET family. As to quaternary structure, homodimer. Interacts with E2F1. Interacts with (acetylated) STAT3; promoting STAT3 recruitment to chromatin. Interacts with CTCF; promoting BRD2 recruitment to chromatin.

The protein resides in the nucleus. The protein localises to the chromosome. Functionally, chromatin reader protein that specifically recognizes and binds histone H4 acetylated at 'Lys-5' and 'Lys-12' (H4K5ac and H4K12ac, respectively), thereby controlling gene expression and remodeling chromatin structures. Recruits transcription factors and coactivators to target gene sites, and activates RNA polymerase II machinery for transcriptional elongation. Plays a key role in genome compartmentalization via its association with CTCF and cohesin: recruited to chromatin by CTCF and promotes formation of topologically associating domains (TADs) via its ability to bind acetylated histones, contributing to CTCF boundary formation and enhancer insulation. Also recognizes and binds acetylated non-histone proteins, such as STAT3. Involved in inflammatory response by regulating differentiation of naive CD4(+) T-cells into T-helper Th17: recognizes and binds STAT3 acetylated at 'Lys-87', promoting STAT3 recruitment to chromatin. In addition to acetylated lysines, also recognizes and binds lysine residues on histones that are both methylated and acetylated on the same side chain to form N6-acetyl-N6-methyllysine (Kacme), an epigenetic mark of active chromatin associated with increased transcriptional initiation. Specifically binds histone H4 acetyl-methylated at 'Lys-5' and 'Lys-12' (H4K5acme and H4K12acme, respectively). In Bos taurus (Bovine), this protein is Bromodomain-containing protein 2 (BRD2).